The chain runs to 160 residues: MKDITPDICDQHEDKVTLLNLPLQNFGQKAAFFGEIVTVRCYHDNSKVRDVLSENGKGKVLVVDGHGSCQKALLGDQLAILAIENDWEGVIVFGAVRDVAQMSQMELGIKALGTSPFKTEKRGAGEVNVTLTMHNQMVQPKDYIYADWNGILISKELLQF.

Substrate is bound by residues 75 to 78 (GDQL) and Arg-97. Asp-98 serves as a coordination point for a divalent metal cation.

This sequence belongs to the class II aldolase/RraA-like family. As to quaternary structure, homotrimer. The cofactor is a divalent metal cation.

The enzyme catalyses 4-hydroxy-4-methyl-2-oxoglutarate = 2 pyruvate. It catalyses the reaction oxaloacetate + H(+) = pyruvate + CO2. Catalyzes the aldol cleavage of 4-hydroxy-4-methyl-2-oxoglutarate (HMG) into 2 molecules of pyruvate. Also contains a secondary oxaloacetate (OAA) decarboxylase activity due to the common pyruvate enolate transition state formed following C-C bond cleavage in the retro-aldol and decarboxylation reactions. The sequence is that of Putative 4-hydroxy-4-methyl-2-oxoglutarate aldolase from Vibrio vulnificus (strain YJ016).